The primary structure comprises 156 residues: Small ribosomal subunit protein uS7 (156 aa).

This sequence belongs to the universal ribosomal protein uS7 family. In terms of assembly, part of the 30S ribosomal subunit. Contacts proteins S9 and S11.

In terms of biological role, one of the primary rRNA binding proteins, it binds directly to 16S rRNA where it nucleates assembly of the head domain of the 30S subunit. Is located at the subunit interface close to the decoding center, probably blocks exit of the E-site tRNA. In Pelagibacter ubique (strain HTCC1062), this protein is Small ribosomal subunit protein uS7.